The following is an 860-amino-acid chain: Leucine--tRNA ligase (860 aa).

The 'HIGH' region motif lies at 42-52 (PYPSGRLHMGH). A 'KMSKS' region motif is present at residues 619–623 (KMSKS). Position 622 (lysine 622) interacts with ATP.

This sequence belongs to the class-I aminoacyl-tRNA synthetase family.

It localises to the cytoplasm. The catalysed reaction is tRNA(Leu) + L-leucine + ATP = L-leucyl-tRNA(Leu) + AMP + diphosphate. This is Leucine--tRNA ligase from Salmonella typhi.